The sequence spans 224 residues: TBP-related factor (224 aa).

Positions 14–34 (RDNVAATSNAAANPHAALQPQ) are disordered. Positions 17–34 (VAATSNAAANPHAALQPQ) are enriched in low complexity. Tandem repeats lie at residues 51–127 (LQNI…ARIL) and 141–218 (LQNI…SPIL).

Belongs to the TBP family. In terms of tissue distribution, primary spermatocytes in the adult testis and in a subset of cells in the dorsal medial region of the embryonic CNS.

The protein resides in the nucleus. Acts as a transcription factor. Binds to the TATA box promoter element which lies close to the position of transcription initiation. In terms of biological role, may be essential for embryonic development. In Drosophila melanogaster (Fruit fly), this protein is TBP-related factor (Trf).